The primary structure comprises 281 residues: Aldo-keto reductase MAP_3007 (281 aa).

The active-site Proton donor is the tyrosine 56. 7 residues coordinate NADPH: leucine 196, isoleucine 234, arginine 236, serine 237, alanine 238, serine 245, and arginine 272.

This sequence belongs to the aldo/keto reductase family.

The chain is Aldo-keto reductase MAP_3007 from Mycolicibacterium paratuberculosis (strain ATCC BAA-968 / K-10) (Mycobacterium paratuberculosis).